A 266-amino-acid polypeptide reads, in one-letter code: Putative carbamate hydrolase RutD (266 aa).

The protein belongs to the AB hydrolase superfamily. Hydrolase RutD family.

The enzyme catalyses carbamate + 2 H(+) = NH4(+) + CO2. Its function is as follows. Involved in pyrimidine catabolism. May facilitate the hydrolysis of carbamate, a reaction that can also occur spontaneously. This is Putative carbamate hydrolase RutD from Escherichia coli O157:H7.